The sequence spans 103 residues: MYAVIVTGGKQYKVAPGEYLKIEKLEIATGESVTFDRVLLVGNGDDVNIGAPVVAGATVVAEVISQGRHDKVRIIKFRRRKHHMKRMGHRQWYTEIKITGIQA.

The protein belongs to the bacterial ribosomal protein bL21 family. In terms of assembly, part of the 50S ribosomal subunit. Contacts protein L20.

This protein binds to 23S rRNA in the presence of protein L20. This Pseudomonas syringae pv. tomato (strain ATCC BAA-871 / DC3000) protein is Large ribosomal subunit protein bL21.